The chain runs to 223 residues: Cytidylate kinase (223 aa).

Residue 17-25 (GPTASGKGT) coordinates ATP.

This sequence belongs to the cytidylate kinase family. Type 1 subfamily.

The protein localises to the cytoplasm. The enzyme catalyses CMP + ATP = CDP + ADP. The catalysed reaction is dCMP + ATP = dCDP + ADP. The protein is Cytidylate kinase of Bordetella bronchiseptica (strain ATCC BAA-588 / NCTC 13252 / RB50) (Alcaligenes bronchisepticus).